A 336-amino-acid chain; its full sequence is Fructose-1,6-bisphosphatase class 1 (336 aa).

Mg(2+)-binding residues include glutamate 92, aspartate 115, leucine 117, and aspartate 118. Residues 118-121 (DGSS), asparagine 211, tyrosine 244, 262-264 (YLY), and lysine 274 contribute to the substrate site. Glutamate 280 lines the Mg(2+) pocket.

This sequence belongs to the FBPase class 1 family. As to quaternary structure, homotetramer. Requires Mg(2+) as cofactor.

The protein resides in the cytoplasm. The enzyme catalyses beta-D-fructose 1,6-bisphosphate + H2O = beta-D-fructose 6-phosphate + phosphate. It participates in carbohydrate biosynthesis; gluconeogenesis. The chain is Fructose-1,6-bisphosphatase class 1 from Aliivibrio fischeri (strain MJ11) (Vibrio fischeri).